Consider the following 453-residue polypeptide: GTPase Der (453 aa).

EngA-type G domains lie at Pro-3–Lys-167 and Ile-187–Lys-360. GTP-binding positions include Gly-9–Ser-16, Asp-57–Leu-61, Asn-119–Asp-122, Gly-193–Ser-200, Asp-240–Ala-244, and Asn-305–Asp-308. Residues Arg-361–Glu-445 form the KH-like domain.

This sequence belongs to the TRAFAC class TrmE-Era-EngA-EngB-Septin-like GTPase superfamily. EngA (Der) GTPase family. In terms of assembly, associates with the 50S ribosomal subunit.

In terms of biological role, GTPase that plays an essential role in the late steps of ribosome biogenesis. The sequence is that of GTPase Der from Buchnera aphidicola subsp. Acyrthosiphon pisum (strain Tuc7).